A 62-amino-acid chain; its full sequence is Beta-defensin 37 (62 aa).

The N-terminal stretch at 1–16 (MKFSYFLLLLLSLSNF) is a signal peptide. 3 disulfide bridges follow: cysteine 29–cysteine 58, cysteine 36–cysteine 51, and cysteine 41–cysteine 59.

It belongs to the beta-defensin family. In terms of tissue distribution, only expressed in epididymis (corpus and cauda).

It localises to the secreted. Has antibacterial activity. This is Beta-defensin 37 (Defb37) from Mus musculus (Mouse).